A 124-amino-acid polypeptide reads, in one-letter code: Transmembrane protein 254 (124 aa).

3 helical membrane passes run 16-36, 62-82, and 96-116; these read LFWV…IFWP, VHAW…YAIV, and LLWF…LIAF.

The protein resides in the membrane. This Bos taurus (Bovine) protein is Transmembrane protein 254 (TMEM254).